The chain runs to 71 residues: Small ribosomal subunit protein bS21 (71 aa).

Residues 43–71 are disordered; sequence TERKRAKASAVKRHAKKLARENARRTRLY. Positions 46–59 are enriched in basic residues; sequence KRAKASAVKRHAKK. Residues 60-71 are compositionally biased toward basic and acidic residues; that stretch reads LARENARRTRLY.

It belongs to the bacterial ribosomal protein bS21 family.

In Edwardsiella ictaluri (strain 93-146), this protein is Small ribosomal subunit protein bS21.